The primary structure comprises 651 residues: MSGELNGNDTSAQAAVSAGSVLEGAAFADEGEQHNESMKTLVLGALGVVYGDIGTSPIYAFREALHAAATNGILARSDILGVVSLIFWALTLVVTVKYVLFVLRADNNGEGGILSLMALVRGALKGRPDLILGVGICGAALFFGDAVITPAISVLSAMEGLEIVAPNLTPFVVPATVVILVTLFSVQKLGTGRVAIVFGPIMALWFVALGASGLWHIFDDPTVMAALNPYYAVRFLTVSPAVAFVTVGAVFLAMTGAEALYADLGHFGRKPIVRAWLWIVFPCLLLNYFGQAAFILSHGEAAALPFFQMIPSFALWPMVLLATAATVIASQAVITGAYSVARQAVQLNILPRLEIQHTSEKLHGQIYIPRVNLLLGLAVVILVLGFEKSSNLAAAYGIAVTGNMLVTTVLLYIVMTRIWNWRVSRALPIILGFLVIDMLFFSANIIKVHEGGWASIGIATVLVLIMWTWVRGTRHLFQKTRKAEVPLDLIVEQMAKRPPTIVPGTAVFLTGDPKSAPTALMHSLKHYKVLHENNVILTVVTASKPWVASADRARVSQYNERFMLVTLTFGYMQQPNILRALGLCRRLGWKFDIMTTSFFLSRRSLKASVHSGMPLWQDKLFILLARTASDATEYFQIPTGRVVEIGTQVNI.

Transmembrane regions (helical) follow at residues leucine 41–phenylalanine 61, valine 82–valine 102, leucine 130–proline 150, isoleucine 163–leucine 183, valine 194–leucine 214, phenylalanine 235–threonine 255, tryptophan 276–leucine 296, methionine 309–alanine 329, isoleucine 366–phenylalanine 386, alanine 395–methionine 415, alanine 426–isoleucine 446, and glutamate 450–valine 470.

The protein belongs to the HAK/KUP transporter (TC 2.A.72) family.

It is found in the cell inner membrane. It catalyses the reaction K(+)(in) + H(+)(in) = K(+)(out) + H(+)(out). Functionally, transport of potassium into the cell. Likely operates as a K(+):H(+) symporter. In Brucella canis (strain ATCC 23365 / NCTC 10854 / RM-666), this protein is Probable potassium transport system protein Kup.